The chain runs to 277 residues: tRNA uridine(34) hydroxylase (277 aa).

In terms of domain architecture, Rhodanese spans 126–221 (SSPDVHVIDT…YLETVRGDDS (96 aa)). C181 (cysteine persulfide intermediate) is an active-site residue.

The protein belongs to the TrhO family.

The enzyme catalyses uridine(34) in tRNA + AH2 + O2 = 5-hydroxyuridine(34) in tRNA + A + H2O. In terms of biological role, catalyzes oxygen-dependent 5-hydroxyuridine (ho5U) modification at position 34 in tRNAs. The chain is tRNA uridine(34) hydroxylase from Anaplasma marginale (strain Florida).